Here is a 434-residue protein sequence, read N- to C-terminus: Methylenetetrahydrofolate--tRNA-(uracil-5-)-methyltransferase TrmFO (434 aa).

10–15 (GAGLAG) is a binding site for FAD.

The protein belongs to the MnmG family. TrmFO subfamily. Requires FAD as cofactor.

The protein resides in the cytoplasm. The catalysed reaction is uridine(54) in tRNA + (6R)-5,10-methylene-5,6,7,8-tetrahydrofolate + NADH + H(+) = 5-methyluridine(54) in tRNA + (6S)-5,6,7,8-tetrahydrofolate + NAD(+). The enzyme catalyses uridine(54) in tRNA + (6R)-5,10-methylene-5,6,7,8-tetrahydrofolate + NADPH + H(+) = 5-methyluridine(54) in tRNA + (6S)-5,6,7,8-tetrahydrofolate + NADP(+). Catalyzes the folate-dependent formation of 5-methyl-uridine at position 54 (M-5-U54) in all tRNAs. The sequence is that of Methylenetetrahydrofolate--tRNA-(uracil-5-)-methyltransferase TrmFO from Bacillus mycoides (strain KBAB4) (Bacillus weihenstephanensis).